A 361-amino-acid chain; its full sequence is Mitogen-activated protein kinase 14 (361 aa).

Residues 32–316 (YVPIKPIGRG…VSDALLHPYM (285 aa)) form the Protein kinase domain. ATP contacts are provided by residues 38 to 46 (IGRGAYGVV) and Lys-61. Asp-158 functions as the Proton acceptor in the catalytic mechanism. Thr-188 carries the post-translational modification Phosphothreonine. Positions 188–190 (TEY) match the TXY motif. Phosphotyrosine is present on Tyr-190. Thr-193 is subject to Phosphothreonine.

The protein belongs to the protein kinase superfamily. CMGC Ser/Thr protein kinase family. MAP kinase subfamily. In terms of assembly, interacts with MKK3. Post-translationally, dually phosphorylated on Thr-188 and Tyr-190, which activates the enzyme.

It carries out the reaction L-seryl-[protein] + ATP = O-phospho-L-seryl-[protein] + ADP + H(+). The enzyme catalyses L-threonyl-[protein] + ATP = O-phospho-L-threonyl-[protein] + ADP + H(+). Its activity is regulated as follows. Activated by threonine and tyrosine phosphorylation. This is Mitogen-activated protein kinase 14 (MPK14) from Arabidopsis thaliana (Mouse-ear cress).